Reading from the N-terminus, the 359-residue chain is Nicotinate-nucleotide--dimethylbenzimidazole phosphoribosyltransferase (359 aa).

Catalysis depends on Glu318, which acts as the Proton acceptor.

Belongs to the CobT family. As to quaternary structure, homodimer.

The enzyme catalyses 5,6-dimethylbenzimidazole + nicotinate beta-D-ribonucleotide = alpha-ribazole 5'-phosphate + nicotinate + H(+). Its pathway is nucleoside biosynthesis; alpha-ribazole biosynthesis; alpha-ribazole from 5,6-dimethylbenzimidazole: step 1/2. In terms of biological role, catalyzes the synthesis of alpha-ribazole-5'-phosphate from nicotinate mononucleotide (NAMN) and 5,6-dimethylbenzimidazole (DMB). The protein is Nicotinate-nucleotide--dimethylbenzimidazole phosphoribosyltransferase of Shigella sonnei (strain Ss046).